The primary structure comprises 330 residues: Glycerol-3-phosphate dehydrogenase [NAD(P)+] (330 aa).

Residues serine 10, tryptophan 11, arginine 31, and lysine 104 each contribute to the NADPH site. Positions 104, 131, and 133 each coordinate sn-glycerol 3-phosphate. Alanine 135 serves as a coordination point for NADPH. Sn-glycerol 3-phosphate is bound by residues lysine 186, aspartate 239, serine 249, arginine 250, and asparagine 251. The Proton acceptor role is filled by lysine 186. Position 250 (arginine 250) interacts with NADPH. Residues valine 274 and glutamate 276 each coordinate NADPH.

This sequence belongs to the NAD-dependent glycerol-3-phosphate dehydrogenase family.

The protein localises to the cytoplasm. The enzyme catalyses sn-glycerol 3-phosphate + NAD(+) = dihydroxyacetone phosphate + NADH + H(+). It carries out the reaction sn-glycerol 3-phosphate + NADP(+) = dihydroxyacetone phosphate + NADPH + H(+). It participates in membrane lipid metabolism; glycerophospholipid metabolism. Catalyzes the reduction of the glycolytic intermediate dihydroxyacetone phosphate (DHAP) to sn-glycerol 3-phosphate (G3P), the key precursor for phospholipid synthesis. In Thermoanaerobacter sp. (strain X514), this protein is Glycerol-3-phosphate dehydrogenase [NAD(P)+].